A 285-amino-acid chain; its full sequence is MRMIIVSGRSGSGKSTALDVLEDNGFYCVDNLPAGLLPELAERALINTELAEPLLAVSIDARNLPSHLTRFPQMLDEVRSRNIQCDVLYLDADEATLLKRFSETRRRHPLSTADRSLAEAIRDETTLLGPIIDLADLKINTTHLNLYQLRDALKLRLLNKPEPGTAFLIESFGFKRGMPVDADLVFDVRCLPNPYWKPELRDHSGLEQPVIDYLSAQADVEEMFQDIFSYLNKWLPRFAASNRSYVTIAIGCTGGHHRSVYLTERLGQVLQQSLKNVQVRHRDLS.

G8–S15 lines the ATP pocket. Position 60–63 (D60–N63) interacts with GTP.

It belongs to the RapZ-like family.

Displays ATPase and GTPase activities. The protein is Nucleotide-binding protein PSPTO_4456 of Pseudomonas syringae pv. tomato (strain ATCC BAA-871 / DC3000).